Here is a 177-residue protein sequence, read N- to C-terminus: Pyruvate synthase subunit PorC (177 aa).

In terms of assembly, heterotetramer of one alpha, one beta, one delta and one gamma chain.

It catalyses the reaction 2 oxidized [2Fe-2S]-[ferredoxin] + pyruvate + CoA = 2 reduced [2Fe-2S]-[ferredoxin] + acetyl-CoA + CO2 + H(+). This is Pyruvate synthase subunit PorC (porC) from Methanothermobacter marburgensis (strain ATCC BAA-927 / DSM 2133 / JCM 14651 / NBRC 100331 / OCM 82 / Marburg) (Methanobacterium thermoautotrophicum).